The chain runs to 130 residues: UPF0713 protein YngL (130 aa).

Transmembrane regions (helical) follow at residues 4–25 (LSFL…LIVF), 62–84 (MLNC…YLFL), and 89–111 (IPLI…VGVG).

Belongs to the UPF0713 family.

The protein localises to the cell membrane. This chain is UPF0713 protein YngL (yngL), found in Bacillus subtilis (strain 168).